The primary structure comprises 73 residues: Translation initiation factor IF-1 1 (73 aa).

The 72-residue stretch at 1–72 (MAKEELIEFG…TKGRINFRHK (72 aa)) folds into the S1-like domain.

The protein belongs to the IF-1 family. Component of the 30S ribosomal translation pre-initiation complex which assembles on the 30S ribosome in the order IF-2 and IF-3, IF-1 and N-formylmethionyl-tRNA(fMet); mRNA recruitment can occur at any time during PIC assembly.

The protein resides in the cytoplasm. Functionally, one of the essential components for the initiation of protein synthesis. Stabilizes the binding of IF-2 and IF-3 on the 30S subunit to which N-formylmethionyl-tRNA(fMet) subsequently binds. Helps modulate mRNA selection, yielding the 30S pre-initiation complex (PIC). Upon addition of the 50S ribosomal subunit IF-1, IF-2 and IF-3 are released leaving the mature 70S translation initiation complex. The chain is Translation initiation factor IF-1 1 from Cupriavidus pinatubonensis (strain JMP 134 / LMG 1197) (Cupriavidus necator (strain JMP 134)).